The sequence spans 707 residues: F-box/WD repeat-containing protein 7 (707 aa).

Positions 1–151 (MNQELLSVGS…SVTNSSSIVD (151 aa)) are disordered. A Phosphoserine; by ATM modification is found at Ser-26. Residues 57 to 68 (GEVVGVEPRPGG) show a composition bias toward low complexity. The span at 69–84 (QNDSQQGQLEENNNRF) shows a compositional bias: polar residues. Over residues 87–129 (VDEDSSGNQEEQEEDEEHAGEQDEEDEEEEEMDQESDDFDQSD) the composition is skewed to acidic residues. Positions 130 to 139 (DSSREDEHTH) are enriched in basic and acidic residues. Thr-205 is subject to Phosphothreonine. Ser-227 is modified (phosphoserine; by SGK1). The region spanning 278-324 (RDFISLLPKELALYVLSFLEPKDLLQAAQTCRYWRILAEDNLLWREK) is the F-box domain. WD repeat units follow at residues 378–418 (GHDD…RTLV), 420–456 (HTGGVWSSQMRDNIIISGSTDRTLKVWNAETGECIHT), 459–498 (GHTSTVRCMHLHEKRVVSGSRDATLRVWDIETGQCLHVLM), 500–536 (HVAAVRCVQYDGRRVVSGAYDFMVKVWDPETETCLHT), 539–578 (GHTNRVYSLQFDGIHVVSGSLDTSIRVWDVETGNCIHTLT), 580–618 (HQSLTSGMELKDNILVSGNADSTVKIWDIKTGQCLQTLQ), and 622–659 (KHQSAVTCLQFNKNFVITSSDDGTVKLWDLKTGEFIRN).

As to quaternary structure, homodimer; homodimerization plays a role in substrate binding and/or ubiquitination and degradation. Component of the SCF(FBXW7) complex consisting of CUL1, RBX1, SKP1 and FBXW7. Interacts (via F-box domain) with SKP1. Interacts (via F-box domain) with pseudophosphatase STYX; the interaction is direct and prevents FBXW7 interaction with SKP1. Interacts with cyclin-E (CCNE1 or CCNE2). Interacts with PSEN1. Forms a trimeric complex with NOTCH1 and SGK1. Interacts with NOTCH1 intracellular domain/NICD and NOTCH4 intracellular domain/NICD. Interacts with NOTCH2 intracellular domain (N2ICD). Interacts with MYC (when phosphorylated). Interacts with USP28, counteracting ubiquitination of MYC. Interacts with JUN. Found in a complex with JUN and PRR7. Interacts with JUN and PRR7; the interaction inhibits ubiquitination-mediated JUN degradation, promoting its phosphorylation and transcriptional activity. Interacts (when phosphorylated at Thr-205) with PIN1, disrupting FBXW7 dimerization and promoting FBXW7 autoubiquitination and degradation. Interacts with UBE2QL1. Interacts with FAM83D; promotes FBXW7 degradation. Interacts with MYCN; FBXW7 competes with AURKA for binding to unphosphorylated MYCN but not for binding to phosphorylated MYCN. Interacts with STOML1. Interacts with NFE2L1. Interacts with USP36, counteracting ubiquitination of MYC. Interacts with NR1D1. Interacts with RICTOR; mediates RICTOR ubiquitination and degradation. Interacts with USP38, counteracting ubiquitination of MYC. In terms of assembly, (Microbial infection) Interacts (via WD repeats) with SV40 large T antigen (via CPD region). In terms of processing, phosphorylation at Thr-205 promotes interaction with PIN1, leading to disrupt FBXW7 dimerization and promoting FBXW7 autoubiquitination and degradation. Phosphorylated by ATM at Ser-26 in response to DNA damage, promoting recruitment to DNA damage sites and 'Lys-63'-linked ubiquitination of phosphorylated XRCC4. Post-translationally, ubiquitinated: autoubiquitinates following phosphorylation at Thr-205 and subsequent interaction with PIN1. Ubiquitination leads to its proteasomal degradation. Widely expressed. In terms of tissue distribution, expressed in brain.

The protein resides in the nucleus. Its subcellular location is the nucleoplasm. The protein localises to the chromosome. It localises to the cytoplasm. It is found in the nucleolus. Its pathway is protein modification; protein ubiquitination. Functionally, substrate recognition component of a SCF (SKP1-CUL1-F-box protein) E3 ubiquitin-protein ligase complex which mediates the ubiquitination and subsequent proteasomal degradation of target proteins. Recognizes and binds phosphorylated sites/phosphodegrons within target proteins and thereafter brings them to the SCF complex for ubiquitination. Identified substrates include cyclin-E (CCNE1 or CCNE2), DISC1, JUN, MYC, NOTCH1 released notch intracellular domain (NICD), NFE2L1, NOTCH2, MCL1, MLST8, RICTOR, and probably PSEN1. Acts as a negative regulator of JNK signaling by binding to phosphorylated JUN and promoting its ubiquitination and subsequent degradation. Involved in bone homeostasis and negative regulation of osteoclast differentiation. Regulates the amplitude of the cyclic expression of hepatic core clock genes and genes involved in lipid and glucose metabolism via ubiquitination and proteasomal degradation of their transcriptional repressor NR1D1; CDK1-dependent phosphorylation of NR1D1 is necessary for SCF(FBXW7)-mediated ubiquitination. Also able to promote 'Lys-63'-linked ubiquitination in response to DNA damage. The SCF(FBXW7) complex facilitates double-strand break repair following phosphorylation by ATM: phosphorylation promotes localization to sites of double-strand breaks and 'Lys-63'-linked ubiquitination of phosphorylated XRCC4, enhancing DNA non-homologous end joining. The sequence is that of F-box/WD repeat-containing protein 7 from Homo sapiens (Human).